The sequence spans 635 residues: Threonine--tRNA ligase (635 aa).

In terms of domain architecture, TGS spans 1 to 62 (MITITLPDGS…EHDAILRIIT (62 aa)). The tract at residues 244 to 535 (DHRKIGKAQD…LIEHYAGIWP (292 aa)) is catalytic. Residues cysteine 335, histidine 386, and histidine 512 each contribute to the Zn(2+) site.

It belongs to the class-II aminoacyl-tRNA synthetase family. Homodimer. The cofactor is Zn(2+).

The protein resides in the cytoplasm. The catalysed reaction is tRNA(Thr) + L-threonine + ATP = L-threonyl-tRNA(Thr) + AMP + diphosphate + H(+). Functionally, catalyzes the attachment of threonine to tRNA(Thr) in a two-step reaction: L-threonine is first activated by ATP to form Thr-AMP and then transferred to the acceptor end of tRNA(Thr). Also edits incorrectly charged L-seryl-tRNA(Thr). The polypeptide is Threonine--tRNA ligase (Xylella fastidiosa (strain M23)).